The following is a 932-amino-acid chain: PMS1 protein homolog 1 (932 aa).

Positions 465–493 (TQSENGNKDHIDESGENEEEAGLENSSEI) are disordered. The HMG box DNA-binding region spans 571–639 (IKKPMSASAL…RYNSQMKRAI (69 aa)).

The protein belongs to the DNA mismatch repair MutL/HexB family. As to quaternary structure, component of the DNA mismatch repair (MMR) complex composed at least of MSH2, MSH3, MSH6, PMS1 and MLH1. The MutL-beta complex is a heterodimer of PMS1 and MLH1. Interacts with MCM9.

Its subcellular location is the nucleus. Functionally, probably involved in the repair of mismatches in DNA. This is PMS1 protein homolog 1 (PMS1) from Homo sapiens (Human).